A 623-amino-acid polypeptide reads, in one-letter code: Putative ABC transporter ATP-binding protein MG014 homolog (623 aa).

Positions 16-325 (LILAPLFTFA…YIVLGLILTS (310 aa)) constitute an ABC transmembrane type-1 domain. The next 6 helical transmembrane spans lie at 27–47 (IIID…VFSI), 86–106 (VILL…CASI), 157–177 (FLRL…FAIA), 180–200 (SDMS…IGIL), 266–286 (NIPF…LLVF), and 307–327 (IFAF…TSLT). The 247-residue stretch at 365 to 611 (LEFKNVAFGL…CDIYVKMKQA (247 aa)) folds into the ABC transporter domain. ATP is bound at residue 400-407 (GPTGSGKS).

Belongs to the ABC transporter superfamily.

Its subcellular location is the cell membrane. This is Putative ABC transporter ATP-binding protein MG014 homolog from Mycoplasma pneumoniae (strain ATCC 29342 / M129 / Subtype 1) (Mycoplasmoides pneumoniae).